A 449-amino-acid chain; its full sequence is Trigger factor (449 aa).

The 86-residue stretch at 172 to 257 (GDRVTVDFVG…LKQVEWAHLP (86 aa)) folds into the PPIase FKBP-type domain.

It belongs to the FKBP-type PPIase family. Tig subfamily.

It localises to the cytoplasm. The catalysed reaction is [protein]-peptidylproline (omega=180) = [protein]-peptidylproline (omega=0). In terms of biological role, involved in protein export. Acts as a chaperone by maintaining the newly synthesized protein in an open conformation. Functions as a peptidyl-prolyl cis-trans isomerase. The sequence is that of Trigger factor from Ralstonia nicotianae (strain ATCC BAA-1114 / GMI1000) (Ralstonia solanacearum).